A 305-amino-acid chain; its full sequence is Homoserine kinase (305 aa).

93–103 (PLSRGLGSSAT) is an ATP binding site.

The protein belongs to the GHMP kinase family. Homoserine kinase subfamily.

Its subcellular location is the cytoplasm. It catalyses the reaction L-homoserine + ATP = O-phospho-L-homoserine + ADP + H(+). The protein operates within amino-acid biosynthesis; L-threonine biosynthesis; L-threonine from L-aspartate: step 4/5. Its function is as follows. Catalyzes the ATP-dependent phosphorylation of L-homoserine to L-homoserine phosphate. In Picosynechococcus sp. (strain ATCC 27264 / PCC 7002 / PR-6) (Agmenellum quadruplicatum), this protein is Homoserine kinase.